Consider the following 531-residue polypeptide: Methyl-accepting chemotaxis protein McpN (531 aa).

Residues 1–24 (MNESVARVFDRILRGLGLKTLNAQ) are Cytoplasmic-facing. The chain crosses the membrane as a helical span at residues 25-45 (FLLSYALMFGLAACASVALYL). The Periplasmic portion of the chain corresponds to 46–174 (SMSISPETIN…LMSARADSVQ (129 aa)). The interval 52–140 (ETINVAGAQR…AMLDQVAQPA (89 aa)) is pilJ-type. The N-box motif lies at 54 to 65 (INVAGAQRMLSQ). Arg-61 contributes to the nitrate binding site. The chain crosses the membrane as a helical span at residues 175 to 195 (HTQMWIAFGCLLAILVLVVLG). Residues 196-531 (RQFGLAPLMR…LRVVLGRFRT (336 aa)) are Cytoplasmic-facing. The HAMP domain occupies 201-254 (APLMRQLRGLEVALTEVGAANFTHALAAGHADNEIGRIVAGYERMRQDVSGLLA). A Methyl-accepting transducer domain is found at 259–495 (SAAETDKDVA…DIDRNITNVS (237 aa)).

It belongs to the methyl-accepting chemotaxis (MCP) protein family. Ligand free ligand-binding domain (LBD) is present in a monomer-dimer equilibrium. Nitrate binding to the periplasmic LBD stabilizes the homodimer.

The protein localises to the cell inner membrane. Functionally, chemotactic-signal transducers respond to changes in the concentration of attractants and repellents in the environment, transduce a signal from the outside to the inside of the cell, and facilitate sensory adaptation through the variation of the level of methylation. McpN is a chemoreceptor that recognizes specifically nitrate and mediates chemoattraction. Binds nitrate specifically and shows no affinity for other ligands such as nitrite. McpN-mediated taxis occurs only under nitrate starvation conditions. The protein is Methyl-accepting chemotaxis protein McpN of Pseudomonas aeruginosa (strain ATCC 15692 / DSM 22644 / CIP 104116 / JCM 14847 / LMG 12228 / 1C / PRS 101 / PAO1).